Here is a 171-residue protein sequence, read N- to C-terminus: Lipoprotein signal peptidase (171 aa).

3 consecutive transmembrane segments (helical) span residues 12–32 (WYWV…WVLA), 67–87 (WQRW…TVWL), and 93–113 (SLLK…GNLV). Active-site residues include Asp-123 and Asp-141. The helical transmembrane segment at 137 to 157 (FNIADSAICIGAVLIIWDAFL) threads the bilayer.

This sequence belongs to the peptidase A8 family.

It is found in the cell inner membrane. It carries out the reaction Release of signal peptides from bacterial membrane prolipoproteins. Hydrolyzes -Xaa-Yaa-Zaa-|-(S,diacylglyceryl)Cys-, in which Xaa is hydrophobic (preferably Leu), and Yaa (Ala or Ser) and Zaa (Gly or Ala) have small, neutral side chains.. It functions in the pathway protein modification; lipoprotein biosynthesis (signal peptide cleavage). Its function is as follows. This protein specifically catalyzes the removal of signal peptides from prolipoproteins. The sequence is that of Lipoprotein signal peptidase from Shewanella baltica (strain OS223).